Reading from the N-terminus, the 309-residue chain is Cytochrome c biogenesis protein CcsA (309 aa).

Helical transmembrane passes span 18-38 (LGIL…GAVF), 43-63 (FFIV…QLLF), 67-87 (ISGH…AWGI), 102-122 (IIPS…CFVL), 148-168 (VMLS…VLFI), 216-236 (SILI…VWAN), 250-267 (TWAF…HMRI), and 279-299 (LATS…FLGI).

It belongs to the CcmF/CycK/Ccl1/NrfE/CcsA family. As to quaternary structure, may interact with ccs1.

It is found in the cellular thylakoid membrane. Its function is as follows. Required during biogenesis of c-type cytochromes (cytochrome c6 and cytochrome f) at the step of heme attachment. This chain is Cytochrome c biogenesis protein CcsA, found in Prochlorococcus marinus (strain MIT 9312).